We begin with the raw amino-acid sequence, 313 residues long: Oxaloacetate tautomerase Fahd2a, mitochondrial (313 aa).

The transit peptide at 1 to 84 (MLGSGRRRLL…TALSVARRAL (84 aa)) directs the protein to the mitochondrion. Glu159, Glu161, and Asp190 together coordinate Mg(2+). Lys202 is subject to N6-acetyllysine; alternate. Lys202 bears the N6-succinyllysine; alternate mark. At Lys233 the chain carries N6-acetyllysine.

This sequence belongs to the FAH family. Mg(2+) is required as a cofactor. Mn(2+) serves as cofactor.

The protein localises to the mitochondrion. The enzyme catalyses oxaloacetate = enol-oxaloacetate. Tautomerase that converts enol-oxaloacetate, a strong inhibitor of succinate dehydrogenase, to the physiological keto form of oxaloacetate. It is thereby required to maximize aerobic respiration efficiency by preventing succinate dehydrogenase inhibition. The polypeptide is Oxaloacetate tautomerase Fahd2a, mitochondrial (Rattus norvegicus (Rat)).